We begin with the raw amino-acid sequence, 401 residues long: Phosphoglycerate kinase (401 aa).

Residues 26–28 (DLN), R41, 64–67 (HLGR), R123, and R156 contribute to the substrate site. Residues K207, G298, E329, and 355 to 358 (GGDS) contribute to the ATP site.

Belongs to the phosphoglycerate kinase family. Monomer.

It is found in the cytoplasm. The catalysed reaction is (2R)-3-phosphoglycerate + ATP = (2R)-3-phospho-glyceroyl phosphate + ADP. The protein operates within carbohydrate degradation; glycolysis; pyruvate from D-glyceraldehyde 3-phosphate: step 2/5. The sequence is that of Phosphoglycerate kinase from Bdellovibrio bacteriovorus (strain ATCC 15356 / DSM 50701 / NCIMB 9529 / HD100).